We begin with the raw amino-acid sequence, 377 residues long: tRNA-specific 2-thiouridylase MnmA (377 aa).

ATP-binding positions include 18-25 (AMSGGVDS) and Met-44. Cys-113 serves as the catalytic Nucleophile. A disulfide bridge connects residues Cys-113 and Cys-210. An ATP-binding site is contributed by Gly-137. Residues 159–161 (RDQ) form an interaction with tRNA region. Cys-210 serves as the catalytic Cysteine persulfide intermediate.

The protein belongs to the MnmA/TRMU family.

The protein localises to the cytoplasm. The catalysed reaction is S-sulfanyl-L-cysteinyl-[protein] + uridine(34) in tRNA + AH2 + ATP = 2-thiouridine(34) in tRNA + L-cysteinyl-[protein] + A + AMP + diphosphate + H(+). In terms of biological role, catalyzes the 2-thiolation of uridine at the wobble position (U34) of tRNA, leading to the formation of s(2)U34. The protein is tRNA-specific 2-thiouridylase MnmA of Rhodospirillum rubrum (strain ATCC 11170 / ATH 1.1.1 / DSM 467 / LMG 4362 / NCIMB 8255 / S1).